A 194-amino-acid polypeptide reads, in one-letter code: E3 ubiquitin-protein ligase RNF4 (194 aa).

The segment covering 1 to 12 (MSTRNPQRKRRG) has biased composition (basic residues). Residues 1–20 (MSTRNPQRKRRGGAVNSRQT) are required for ubiquitination activity. Residues 1 to 36 (MSTRNPQRKRRGGAVNSRQTQKRTRETTSTPEISLE) are disordered. The interval 6–65 (PQRKRRGGAVNSRQTQKRTRETTSTPEISLEAEPIELVETVGDEIVDLTCESLEPVVVDL) is mediates interaction with TRPS1. Short sequence motifs (SUMO interaction motif) lie at residues 40–43 (IELV), 50–53 (IVDL), 61–63 (VVV), and 71–74 (VVIV). A phosphoserine mark is found at Ser98 and Ser99. 8 residues coordinate Zn(2+): Cys136, Cys139, Cys158, His160, Cys163, Cys166, Cys177, and Cys180. The segment at 136–181 (CPICMDGYSEIVQNGRLIVSTECGHVFCSQCLRDSLKNANTCPTCR) adopts an RING-type zinc-finger fold.

As to quaternary structure, homodimer (via RING-type zinc finger domain). Interacts with GSC2. Interacts with AR/the androgen receptor and TBP. Interacts with TCF20. Interacts with PATZ1. Interacts with TRPS1; negatively regulates TRPS1 transcriptional repressor activity. Interacts with PML (isoform PML-1, isoform PML-2, isoform PML-3, isoform PML-4, isoform PML-5 and isoform PML-6). Interacts with PRDM1/Blimp-1. Post-translationally, sumoylated; conjugated by one or two SUMO1 moieties. Autoubiquitinated. Widely expressed with highest levels in testis.

It is found in the cytoplasm. It localises to the nucleus. Its subcellular location is the nucleoplasm. The protein resides in the PML body. The enzyme catalyses S-ubiquitinyl-[E2 ubiquitin-conjugating enzyme]-L-cysteine + [acceptor protein]-L-lysine = [E2 ubiquitin-conjugating enzyme]-L-cysteine + N(6)-ubiquitinyl-[acceptor protein]-L-lysine.. Its pathway is protein modification; protein ubiquitination. E3 ubiquitin-protein ligase which binds polysumoylated chains covalently attached to proteins and mediates 'Lys-6'-, 'Lys-11'-, 'Lys-48'- and 'Lys-63'-linked polyubiquitination of those substrates and their subsequent targeting to the proteasome for degradation. Regulates the degradation of several proteins including PML and the transcriptional activator PEA3. Involved in chromosome alignment and spindle assembly, it regulates the kinetochore CENPH-CENPI-CENPK complex by targeting polysumoylated CENPI to proteasomal degradation. Regulates the cellular responses to hypoxia and heat shock through degradation of respectively EPAS1 and PARP1. Alternatively, it may also bind DNA/nucleosomes and have a more direct role in the regulation of transcription for instance enhancing basal transcription and steroid receptor-mediated transcriptional activation. Catalyzes ubiquitination of sumoylated PARP1 in response to PARP1 trapping to chromatin, leading to PARP1 removal from chromatin by VCP/p97. This is E3 ubiquitin-protein ligase RNF4 from Rattus norvegicus (Rat).